The following is a 433-amino-acid chain: Amino-acid acetyltransferase (433 aa).

An N-acetyltransferase domain is found at 287–426; the sequence is ELVREAAIED…ASLYNYQRNS (140 aa).

This sequence belongs to the acetyltransferase family. ArgA subfamily.

Its subcellular location is the cytoplasm. The catalysed reaction is L-glutamate + acetyl-CoA = N-acetyl-L-glutamate + CoA + H(+). The protein operates within amino-acid biosynthesis; L-arginine biosynthesis; N(2)-acetyl-L-ornithine from L-glutamate: step 1/4. This chain is Amino-acid acetyltransferase, found in Pseudomonas fluorescens (strain SBW25).